The chain runs to 354 residues: Ornithine transcarbamylase, mitochondrial (354 aa).

The transit peptide at 1–32 (MLSNLRILLNNAALRKGHTSVVRHFWCGKPVQ) directs the protein to the mitochondrion. At lysine 70 the chain carries N6-acetyllysine; alternate. Lysine 70 carries the post-translational modification N6-succinyllysine; alternate. At lysine 80 the chain carries N6-succinyllysine. Lysine 88 is subject to N6-acetyllysine; alternate. At lysine 88 the chain carries N6-succinyllysine; alternate. 90–94 (STRTR) serves as a coordination point for carbamoyl phosphate. Serine 133 carries the phosphoserine modification. Arginine 141 is a binding site for carbamoyl phosphate. Arginine 141 serves as a coordination point for L-ornithine. The residue at position 144 (lysine 144) is an N6-acetyllysine; alternate. The residue at position 144 (lysine 144) is an N6-succinyllysine; alternate. Residue histidine 168 participates in carbamoyl phosphate binding. Residue asparagine 199 participates in L-ornithine binding. Lysine 221, lysine 231, and lysine 238 each carry N6-acetyllysine; alternate. An N6-succinyllysine; alternate mark is found at lysine 221, lysine 231, and lysine 238. At lysine 243 the chain carries N6-acetyllysine. L-ornithine is bound at residue 263–267 (DTWIS). Residues lysine 274 and lysine 289 each carry the N6-succinyllysine modification. Lysine 292 carries the post-translational modification N6-acetyllysine; alternate. N6-succinyllysine; alternate is present on lysine 292. 302 to 305 (HCLP) is an L-ornithine binding site. Cysteine 303 is an active-site residue. Lysine 307 bears the N6-acetyllysine; alternate mark. Lysine 307 is subject to N6-succinyllysine; alternate. Arginine 330 provides a ligand contact to carbamoyl phosphate. Residue arginine 330 coordinates L-ornithine.

It belongs to the aspartate/ornithine carbamoyltransferase superfamily. OTCase family. As to quaternary structure, homotrimer. In terms of processing, acetylation at Lys-88 negatively regulates ornithine carbamoyltransferase activity in response to nutrient signals.

Its subcellular location is the mitochondrion matrix. It carries out the reaction carbamoyl phosphate + L-ornithine = L-citrulline + phosphate + H(+). Its pathway is nitrogen metabolism; urea cycle; L-citrulline from L-ornithine and carbamoyl phosphate: step 1/1. With respect to regulation, negatively regulated by lysine acetylation. Its function is as follows. Catalyzes the second step of the urea cycle, the condensation of carbamoyl phosphate with L-ornithine to form L-citrulline. The urea cycle ensures the detoxification of ammonia by converting it to urea for excretion. The polypeptide is Ornithine transcarbamylase, mitochondrial (Mus musculus (Mouse)).